The sequence spans 82 residues: Small ribosomal subunit protein bS16 (82 aa).

This sequence belongs to the bacterial ribosomal protein bS16 family.

The polypeptide is Small ribosomal subunit protein bS16 (Aeromonas salmonicida (strain A449)).